Reading from the N-terminus, the 668-residue chain is E3 ubiquitin-protein ligase RNF139 (668 aa).

At Ala-2 the chain carries N-acetylalanine. Helical transmembrane passes span 51–71 (IGLQ…VLIL), 85–105 (AFLL…HIDF), 125–145 (SLWM…VTLL), 154–174 (LMIL…PLHI), 178–198 (VVLM…AVKL), 293–313 (GMSA…LAFI), 323–343 (LGFV…LSGL), 356–376 (MCLL…PVLM), 390–410 (FPVL…SYVL), 420–440 (LFAV…SLTV), and 470–490 (IIEF…MMFE). The RING-type; atypical zinc-finger motif lies at 547-586 (CAICYHEFTTSARITPCNHYFHALCLRKWLYIQDTCPMCH). Residues 602-668 (SNNNGFIAPN…AAAEFNDDTD (67 aa)) form a disordered region. A compositionally biased stretch (basic and acidic residues) spans 618-630 (EALREDAAGSDRE). Residues 631–641 (LNEDDSTDCDD) show a composition bias toward acidic residues. Ser-636 carries the post-translational modification Phosphoserine. Phosphothreonine occurs at positions 637 and 667.

In terms of assembly, interacts with VHL. Interacts with MHC class I and HM13. Component of SCAP-SREBP complex composed of SREBF2, SCAP and RNF139; the complex hampers the interaction between SCAP and SEC24B, thereby reducing SREBF2 proteolytic processing. Interacts with SREBF2 (via C-terminal domain). Interacts with SCAP; the interaction inhibits the interaction of SCAP with SEC24B and hampering the ER to Golgi transport of the SCAP-SREBP complex. Interacts with SEC24B. Interacts with INSIG1 and INSIG2. Interacts with EIF3F and EIF3H; the interaction leads to protein translation inhibitions in a ubiquitination-dependent manner. Interacts with XBP1 isoform 1; the interaction induces ubiquitination and degradation of XBP1 isoform 1. Interacts with AUP1, AMFR and UBE2G2; interaction with AUP1 facilitates interaction of RNF139 with ubiquitin-conjugating enzyme UBE2G2 and ubiquitin ligase AMFR/gp78, leading to sterol-induced ubiquitination of HMGCR and its subsequent proteasomal degradation. Post-translationally, autoubiquitinated. Ubiquitination is induced by sterol and leads to ist degradation via the ubiquitin-proteasome pathway.

The protein resides in the endoplasmic reticulum membrane. The catalysed reaction is S-ubiquitinyl-[E2 ubiquitin-conjugating enzyme]-L-cysteine + [acceptor protein]-L-lysine = [E2 ubiquitin-conjugating enzyme]-L-cysteine + N(6)-ubiquitinyl-[acceptor protein]-L-lysine.. The protein operates within protein modification; protein ubiquitination. Functionally, E3-ubiquitin ligase; acts as a negative regulator of cell proliferation through mechanisms involving G2/M arrest and cell death. Required for MHC class I ubiquitination in cells expressing the cytomegalovirus protein US2 before dislocation from the endoplasmic reticulum (ER). Affects SREBP processing by hindering the SREBP-SCAP complex translocation from the ER to the Golgi, thereby reducing SREBF2 target gene expression. Involved in the sterol-accelerated degradation of HMGCR. This is achieved through binding to INSIG1 and/or INSIG2 at the ER membrane. In addition, interaction of RNF139 with AUP1 facilitates interaction of RNF139 with ubiquitin-conjugating enzyme UBE2G2 and ubiquitin ligase AMFR, leading to ubiquitination of HMGCR. The ubiquitinated HMGCR is then released from the ER by the complex into the cytosol for subsequent destruction. Required for INSIG1 ubiquitination. May be required for EIF3 complex ubiquitination. The sequence is that of E3 ubiquitin-protein ligase RNF139 from Mus musculus (Mouse).